The chain runs to 1189 residues: Increased DNA methylation 1 (1189 aa).

2 disordered regions span residues 475 to 498 (KNLH…HDSL) and 523 to 597 (SRDE…CRLL). The span at 523–532 (SRDERLRNEK) shows a compositional bias: basic and acidic residues. Basic residues-rich tracts occupy residues 541 to 550 (KKGRKKARKH) and 565 to 590 (NKGK…KRNN). The segment at 726-771 (DDSCGVCGDGGELICCDNCPSTFHQACLSMQVLPEGSWYCSSCTCW) adopts a PHD-type 1 zinc-finger fold. The segment at 767 to 823 (SCTCWICSELVSDNAERSQDFKCSQCAHKYHGTCLQGISKRRKLFPETYFCGKNCEK) adopts a PHD-type 2; degenerate zinc-finger fold. The N-acetyltransferase domain occupies 879–1024 (MEESFLSMVD…GTTLLKKTLY (146 aa)). Positions 1031–1157 (TMKGVCLSKE…SSSSAALEEV (127 aa)) are disordered. 3 stretches are compositionally biased toward basic and acidic residues: residues 1038-1050 (SKER…KEAD), 1102-1114 (NPSR…DRPN), and 1129-1145 (CLQK…KETT). Over residues 1147–1157 (ASSSSAALEEV) the composition is skewed to low complexity.

Interacts (via N-terminus) with IDM2. Interacts with IMD3. Part of a complex made of MBD7, IDM1, IDM2 and IDM3. Expressed in cotyledons and hypocotyls in young seedlings.

It localises to the nucleus. In terms of biological role, histone H3 acetyltransferase that binds methylated DNA at chromatin sites lacking histone H3K4 di- or trimethylation and catalyzes H3K18 and H3K23 acetylation. Prevents the transcriptional silencing of transgenes and of some endogenous genes. Requires the presence of IDM2 for efficient H3K18 acetylation, but not for H3K23 acetylation. In Arabidopsis thaliana (Mouse-ear cress), this protein is Increased DNA methylation 1.